The following is a 203-amino-acid chain: Cupin-domain-containing oxidoreductase fogC (203 aa).

The segment at 105 to 171 is cupin-like domain; that stretch reads DFAPGVESPL…GNGTLPGRML (67 aa).

The protein belongs to the virC family.

The protein operates within secondary metabolite biosynthesis. Functionally, cupin-domain-containing oxidoreductase; part of the gene cluster that mediates the biosynthesis of flavoglaucin and congeners (including aspergin, dihydroauroglaucin and auroglaucin), prenylated salicylaldehyde derivatives carrying a saturated or an unsaturated C-7 side chain. The PKS fogA releases the carboxylic acid (8E,10E,12E)-3,5,7-trihydroxytetradeca-8,10,12-trienoic acid as its product, as well as derivatives with one and two double bonds. FogA is indeed able to reduce the initial triketide, thus being at least partially responsible for the differently saturated heptyl side chains of flavoglaucin congeners. The oxidoreductases fogB, fogC and fogD modify the nascent polyketide in fogA-bound form and, together, fogA, fogB, fogC and fogD are necessary for the formation of the aromatic core and the cyclized PKS products are released as salicyl alcohols. In particular, fogB is responsible for oxidation of a hydroxyl group or reduction of remaining double bond(s) at the C-7 residue whereas fogD is probably involved in the reductive release of the modified PKS products. The cytochrome P450 monooxygenase fogE is then responsible for the hydroxylation at C-3 of the benzene ring. The fogE products are substrates of the prenyltransferase fogH and the prenylated benzyl alcohols are subsequently oxidized by the fogF to produce the final aryl aldehydes flavoglaucin and congeners. The short-chain dehydrogenase fogG does not seem to be involved in the biosynthesis of the prenylated salicylaldehyde derivatives. The sequence is that of Cupin-domain-containing oxidoreductase fogC from Aspergillus ruber (strain CBS 135680).